Consider the following 1529-residue polypeptide: Ras guanine nucleotide exchange factor B (1529 aa).

Residues 135-186 (ISNIEKQLSNLVNLKSNTTEQTDRKYKTNLIDFKESIIQLEKDCKNLLKQSN) adopt a coiled-coil conformation. Disordered regions lie at residues 290–357 (INTL…ISIN), 576–600 (TTTT…KSSH), 680–724 (KRNT…HIQQ), 847–948 (MGKE…NHNR), and 1168–1206 (QPPQ…STNL). Composition is skewed to low complexity over residues 576 to 591 (TTTT…TTTN), 683 to 724 (TSSG…HIQQ), and 853 to 887 (NSNT…NNNE). 2 coiled-coil regions span residues 722 to 798 (IQQI…LNRK) and 871 to 898 (NNNN…ETNK). Over residues 888–898 (NKNENKNETNK) the composition is skewed to basic and acidic residues. Low complexity-rich tracts occupy residues 906–916 (SSTSTLSSSTT), 924–940 (SSTN…LLPP), 1168–1187 (QPPQ…TTQP), and 1197–1206 (QPQLQQSTNL). Positions 1075 to 1205 (FYRSIKYASL…PQPQLQQSTN (131 aa)) constitute an N-terminal Ras-GEF domain. In terms of domain architecture, Ras-GEF spans 1282 to 1517 (SSTDIAEQLT…YEQSILLEPK (236 aa)).

Its subcellular location is the cytoplasm. Promotes the exchange of Ras-bound GDP by GTP. Involved in phagocytosis, fluid-phase endocytosis, regulation of macropinocytosis and control of cell movement. This is Ras guanine nucleotide exchange factor B (gefB) from Dictyostelium discoideum (Social amoeba).